The chain runs to 260 residues: Small ribosomal subunit protein eS1 (260 aa).

Residues 1 to 18 show a composition bias toward basic residues; it reads MAVGKNKRISKGKKGGKK. Positions 1–22 are disordered; it reads MAVGKNKRISKGKKGGKKKAAD.

The protein belongs to the eukaryotic ribosomal protein eS1 family. As to quaternary structure, component of the small ribosomal subunit. Mature ribosomes consist of a small (40S) and a large (60S) subunit. The 40S subunit contains about 33 different proteins and 1 molecule of RNA (18S). The 60S subunit contains about 49 different proteins and 3 molecules of RNA (25S, 5.8S and 5S).

It localises to the cytoplasm. The chain is Small ribosomal subunit protein eS1 from Helianthus annuus (Common sunflower).